Here is a 197-residue protein sequence, read N- to C-terminus: Cytochrome c oxidase polypeptide 5, mitochondrial (197 aa).

Residues 1-13 (MFLRSVTRAAARS) constitute a mitochondrion transit peptide. Residues 14 to 129 (SAVPTTGLRS…KGENLKIFFK (116 aa)) lie on the Mitochondrial matrix side of the membrane. A helical transmembrane segment spans residues 130 to 147 (VAQLTLVSFGIFYVIHLF). Over 148–197 (AKPQPKTMTKEWQEASNEYAKQEKINPIYGISAEGYEGKGFVQSPPAEKQ) the chain is Mitochondrial intermembrane.

Belongs to the cytochrome c oxidase IV family. In terms of assembly, component of the cytochrome c oxidase (complex IV, CIV), a multisubunit enzyme composed of a catalytic core of 3 subunits and seevral supernumerary subunits. The complex exists as a monomer or a dimer and forms supercomplexes (SCs) in the inner mitochondrial membrane with ubiquinol-cytochrome c oxidoreductase (cytochrome b-c1 complex, complex III, CIII).

The protein localises to the mitochondrion inner membrane. The protein operates within energy metabolism; oxidative phosphorylation. Functionally, component of the cytochrome c oxidase, the last enzyme in the mitochondrial electron transport chain which drives oxidative phosphorylation. The respiratory chain contains 3 multisubunit complexes succinate dehydrogenase (complex II, CII), ubiquinol-cytochrome c oxidoreductase (cytochrome b-c1 complex, complex III, CIII) and cytochrome c oxidase (complex IV, CIV), that cooperate to transfer electrons derived from NADH and succinate to molecular oxygen, creating an electrochemical gradient over the inner membrane that drives transmembrane transport and the ATP synthase. Cytochrome c oxidase is the component of the respiratory chain that catalyzes the reduction of oxygen to water. Electrons originating from reduced cytochrome c in the intermembrane space (IMS) are transferred via the dinuclear copper A center (CU(A)) of subunit 2 and heme A of subunit 1 to the active site in subunit 1, a binuclear center (BNC) formed by heme A3 and copper B (CU(B)). The BNC reduces molecular oxygen to 2 water molecules using 4 electrons from cytochrome c in the IMS and 4 protons from the mitochondrial matrix. In Aspergillus niger, this protein is Cytochrome c oxidase polypeptide 5, mitochondrial (cox5).